A 142-amino-acid chain; its full sequence is Transcription antitermination protein NusB (142 aa).

It belongs to the NusB family.

In terms of biological role, involved in transcription antitermination. Required for transcription of ribosomal RNA (rRNA) genes. Binds specifically to the boxA antiterminator sequence of the ribosomal RNA (rrn) operons. This chain is Transcription antitermination protein NusB, found in Roseiflexus castenholzii (strain DSM 13941 / HLO8).